We begin with the raw amino-acid sequence, 237 residues long: Peptidase E (237 aa).

Catalysis depends on charge relay system residues Ser122, Asp137, and His159.

Belongs to the peptidase S51 family.

Its subcellular location is the cytoplasm. It catalyses the reaction Dipeptidase E catalyzes the hydrolysis of dipeptides Asp-|-Xaa. It does not act on peptides with N-terminal Glu, Asn or Gln, nor does it cleave isoaspartyl peptides.. Hydrolyzes dipeptides containing N-terminal aspartate residues. May play a role in allowing the cell to use peptide aspartate to spare carbon otherwise required for the synthesis of the aspartate family of amino acids. The protein is Peptidase E of Shewanella baltica (strain OS185).